The primary structure comprises 266 residues: Interleukin-1 beta (266 aa).

A propeptide spanning residues 1–114 (MAAVPELSSE…DTWDEEYESD (114 aa)) is cleaved from the precursor.

Belongs to the IL-1 family. In terms of assembly, monomer. In its precursor form, weakly interacts with full-length MEFV; the mature cytokine does not interact at all. Interacts with integrins ITGAV:ITGBV and ITGA5:ITGB1; integrin-binding is required for IL1B signaling. Interacts with cargo receptor TMED10; the interaction is direct and is required for the secretion of IL1B mature form. Interacts with HSP90AB1; the interaction facilitates cargo translocation into the ERGIC. Interacts with HSP90B1; the interaction facilitates cargo translocation into the ERGIC.

The protein localises to the cytoplasm. It localises to the cytosol. The protein resides in the secreted. It is found in the lysosome. Its subcellular location is the extracellular exosome. Functionally, potent pro-inflammatory cytokine. Initially discovered as the major endogenous pyrogen, induces prostaglandin synthesis, neutrophil influx and activation, T-cell activation and cytokine production, B-cell activation and antibody production, and fibroblast proliferation and collagen production. Promotes Th17 differentiation of T-cells. Synergizes with IL12/interleukin-12 to induce IFNG synthesis from T-helper 1 (Th1) cells. Plays a role in angiogenesis by inducing VEGF production synergistically with TNF and IL6. Involved in transduction of inflammation downstream of pyroptosis: its mature form is specifically released in the extracellular milieu by passing through the gasdermin-D (GSDMD) pore. This chain is Interleukin-1 beta (IL1B), found in Cavia porcellus (Guinea pig).